A 394-amino-acid polypeptide reads, in one-letter code: MADTLAIVVAAGRSSRMGEGPKKQYRLLAGRPVLGRTLEVFEHAPAVDGVVLVVAPGEEDWCREEIVTRFGFTKVVAVVPGGEVRRDSVWAGLQALPPCALVLVHDGVRPFVTARQIAAVAEAARECGAATLAVPPKDTVKLGGPPGAPVSTLPRENLWLVQTPQAFRFDVLIKAHHLARERGLAATDDTSLAEAAGYDVRMVPGAYTNIKITTPEDLAFAEALLGGGPVLVGFGYDVHRLVDDRKLILGGVEVPHDRGLLGHSDADVLVHAVMDALLGAAGAGDIGRWFPDDDPTYRGISSMDLLVRVAAFLRERGLETSNLDAVVVAEAPRLSPFISRMRDNLASVLGVSPAAVNVKATTTEGLGFTGSGAGIAAYAVAALRRIVLPGDRVL.

A 2-C-methyl-D-erythritol 4-phosphate cytidylyltransferase region spans residues 1–230 (MADTLAIVVA…AEALLGGGPV (230 aa)). Residues 231-394 (LVGFGYDVHR…RIVLPGDRVL (164 aa)) form a 2-C-methyl-D-erythritol 2,4-cyclodiphosphate synthase region. Residues Asp237 and His239 each coordinate a divalent metal cation. Residues 237–239 (DVH) and 263–264 (HS) each bind 4-CDP-2-C-methyl-D-erythritol 2-phosphate. His271 provides a ligand contact to a divalent metal cation. 4-CDP-2-C-methyl-D-erythritol 2-phosphate-binding positions include 285-287 (DIG), 290-294 (FPDDD), 361-364 (TTTE), and Phe368.

It in the N-terminal section; belongs to the IspD/TarI cytidylyltransferase family. IspD subfamily. The protein in the C-terminal section; belongs to the IspF family. The cofactor is a divalent metal cation.

It catalyses the reaction 2-C-methyl-D-erythritol 4-phosphate + CTP + H(+) = 4-CDP-2-C-methyl-D-erythritol + diphosphate. It carries out the reaction 4-CDP-2-C-methyl-D-erythritol 2-phosphate = 2-C-methyl-D-erythritol 2,4-cyclic diphosphate + CMP. The protein operates within isoprenoid biosynthesis; isopentenyl diphosphate biosynthesis via DXP pathway; isopentenyl diphosphate from 1-deoxy-D-xylulose 5-phosphate: step 2/6. It participates in isoprenoid biosynthesis; isopentenyl diphosphate biosynthesis via DXP pathway; isopentenyl diphosphate from 1-deoxy-D-xylulose 5-phosphate: step 4/6. In terms of biological role, bifunctional enzyme that catalyzes the formation of 4-diphosphocytidyl-2-C-methyl-D-erythritol from CTP and 2-C-methyl-D-erythritol 4-phosphate (MEP) (IspD), and catalyzes the conversion of 4-diphosphocytidyl-2-C-methyl-D-erythritol 2-phosphate (CDP-ME2P) to 2-C-methyl-D-erythritol 2,4-cyclodiphosphate (ME-CPP) with a corresponding release of cytidine 5-monophosphate (CMP) (IspF). The protein is Bifunctional enzyme IspD/IspF of Desulforudis audaxviator (strain MP104C).